The sequence spans 537 residues: Nedd4 binding protein 3 (537 aa).

Residue serine 172 is modified to Phosphoserine. Disordered regions lie at residues 173–234, 327–359, and 422–456; these read LDEG…VLSC, RKEL…EEEA, and LQEQ…EARE. Residues 178–207 are compositionally biased toward low complexity; it reads PEPSLSDSSSGGSFGRSPGTGPSPFSSSLG. The stretch at 295–523 forms a coiled coil; the sequence is VDRLHEVAQK…LEQELRVLRE (229 aa).

It belongs to the N4BP3 family. In terms of assembly, binds NEDD4. Interacts with 14-3-3 proteins. Interacts with MAVS.

It localises to the cytoplasmic vesicle. It is found in the cell projection. The protein localises to the axon. Its subcellular location is the dendrite. Functionally, plays a positive role in the antiviral innate immune signaling pathway. Mechanistically, interacts with MAVS and functions as a positive regulator to promote 'Lys-63'-linked polyubiquitination of MAVS and thus strengthens the interaction between MAVS and TRAF2. Also plays a role in axon and dendrite arborization during cranial nerve development. May also be important for neural crest migration and early development of other anterior structures including eye, brain and cranial cartilage. The sequence is that of Nedd4 binding protein 3 from Rattus norvegicus (Rat).